The chain runs to 119 residues: Ribonuclease P protein component (119 aa).

It belongs to the RnpA family. As to quaternary structure, consists of a catalytic RNA component (M1 or rnpB) and a protein subunit.

It catalyses the reaction Endonucleolytic cleavage of RNA, removing 5'-extranucleotides from tRNA precursor.. In terms of biological role, RNaseP catalyzes the removal of the 5'-leader sequence from pre-tRNA to produce the mature 5'-terminus. It can also cleave other RNA substrates such as 4.5S RNA. The protein component plays an auxiliary but essential role in vivo by binding to the 5'-leader sequence and broadening the substrate specificity of the ribozyme. The chain is Ribonuclease P protein component from Bacillus cereus (strain ZK / E33L).